The following is a 538-amino-acid chain: uncharacterized protein (538 aa).

The first 17 residues, 1 to 17 (MNLQILLLLLLFCHVAA), serve as a signal peptide directing secretion. Asn-115 is a glycosylation site (N-linked (GlcNAc...) asparagine).

This is an uncharacterized protein from Caenorhabditis elegans.